Here is a 564-residue protein sequence, read N- to C-terminus: 2-succinyl-5-enolpyruvyl-6-hydroxy-3-cyclohexene-1-carboxylate synthase (564 aa).

Belongs to the TPP enzyme family. MenD subfamily. As to quaternary structure, homodimer. The cofactor is Mg(2+). It depends on Mn(2+) as a cofactor. Requires thiamine diphosphate as cofactor.

It catalyses the reaction isochorismate + 2-oxoglutarate + H(+) = 5-enolpyruvoyl-6-hydroxy-2-succinyl-cyclohex-3-ene-1-carboxylate + CO2. It participates in quinol/quinone metabolism; 1,4-dihydroxy-2-naphthoate biosynthesis; 1,4-dihydroxy-2-naphthoate from chorismate: step 2/7. The protein operates within quinol/quinone metabolism; menaquinone biosynthesis. Catalyzes the thiamine diphosphate-dependent decarboxylation of 2-oxoglutarate and the subsequent addition of the resulting succinic semialdehyde-thiamine pyrophosphate anion to isochorismate to yield 2-succinyl-5-enolpyruvyl-6-hydroxy-3-cyclohexene-1-carboxylate (SEPHCHC). The chain is 2-succinyl-5-enolpyruvyl-6-hydroxy-3-cyclohexene-1-carboxylate synthase from Photorhabdus laumondii subsp. laumondii (strain DSM 15139 / CIP 105565 / TT01) (Photorhabdus luminescens subsp. laumondii).